A 455-amino-acid polypeptide reads, in one-letter code: Growth/differentiation factor 6 (455 aa).

The first 22 residues, 1-22 (MDTPRVLLSAVFLISFLWDLPG), serve as a signal peptide directing secretion. Positions 23 to 335 (FQQASISSSS…LPSPGRRRRR (313 aa)) are excised as a propeptide. Residues 29–93 (SSSSSSAELG…EPPGRGPRVV (65 aa)) form a disordered region. Residues 45–76 (SRKEGKMQRAPRDSDAGREGQEPQPRPQDEPR) show a composition bias toward basic and acidic residues. Residues 77-91 (AQQPRAQEPPGRGPR) are compositionally biased toward low complexity. A glycan (N-linked (GlcNAc...) asparagine) is linked at Asn-114. Disordered regions lie at residues 244–267 (EAEA…GFGR) and 300–351 (AEAA…KKSR). Basic residues predominate over residues 330-351 (GRRRRRTAFASRHGKRHGKKSR). Disulfide bonds link Cys-354/Cys-420, Cys-383/Cys-452, and Cys-387/Cys-454.

The protein belongs to the TGF-beta family. As to quaternary structure, homodimer; disulfide-linked.

It is found in the secreted. Growth factor that controls proliferation and cellular differentiation in the retina and bone formation. Plays a key role in regulating apoptosis during retinal development. Establishes dorsal-ventral positional information in the retina and controls the formation of the retinotectal map. Required for normal formation of bones and joints in the limbs, skull, digits and axial skeleton. Plays a key role in establishing boundaries between skeletal elements during development. Regulation of GDF6 expression seems to be a mechanism for evolving species-specific changes in skeletal structures. Seems to positively regulate differentiation of chondrogenic tissue through the growth factor receptors subunits BMPR1A, BMPR1B, BMPR2 and ACVR2A, leading to the activation of SMAD1-SMAD5-SMAD8 complex. The regulation of chondrogenic differentiation is inhibited by NOG. Also involved in the induction of adipogenesis from mesenchymal stem cells. This mechanism acts through the growth factor receptors subunits BMPR1A, BMPR2 and ACVR2A and the activation of SMAD1-SMAD5-SMAD8 complex and MAPK14/p38. The sequence is that of Growth/differentiation factor 6 (GDF6) from Homo sapiens (Human).